A 184-amino-acid polypeptide reads, in one-letter code: Tumor protein D52 (184 aa).

Positions 1-43 (MDRGEQGLLRTDTVPEEAEDAAATISATETLSEEEQEELRREL) are disordered. The stretch at 22–74 (AATISATETLSEEEQEELRRELAKVEEEIQTLSQVLAAREKHLAEIKRKLGIN) forms a coiled coil. Serine 136 is subject to Phosphoserine. The segment at 147–184 (KVGGTKPAGGDFGEVLNSTANASATSGEPVPEQTQEGL) is disordered. Residues 162–184 (LNSTANASATSGEPVPEQTQEGL) show a composition bias toward polar residues.

The protein belongs to the TPD52 family. In terms of assembly, forms a homodimer or heterodimer with other members of the family. Phosphorylated in a calcium/calmodulin-dependent manner.

This chain is Tumor protein D52 (TPD52), found in Oryctolagus cuniculus (Rabbit).